The following is a 380-amino-acid chain: Chaperone protein DnaJ (380 aa).

A J domain is found at 5–70 (DYYEVLGLQK…EKRAAYDQYG (66 aa)). A CR-type zinc finger spans residues 136–214 (GCKKDIRIST…CHGDGRVQKA (79 aa)). Positions 149, 152, 166, 169, 188, 191, 202, and 205 each coordinate Zn(2+). CXXCXGXG motif repeat units lie at residues 149 to 156 (CDTCHGSG), 166 to 173 (CSHCHGSG), 188 to 195 (CPSCHGSG), and 202 to 209 (CKSCHGDG).

This sequence belongs to the DnaJ family. In terms of assembly, homodimer. Zn(2+) is required as a cofactor.

It localises to the cytoplasm. In terms of biological role, participates actively in the response to hyperosmotic and heat shock by preventing the aggregation of stress-denatured proteins and by disaggregating proteins, also in an autonomous, DnaK-independent fashion. Unfolded proteins bind initially to DnaJ; upon interaction with the DnaJ-bound protein, DnaK hydrolyzes its bound ATP, resulting in the formation of a stable complex. GrpE releases ADP from DnaK; ATP binding to DnaK triggers the release of the substrate protein, thus completing the reaction cycle. Several rounds of ATP-dependent interactions between DnaJ, DnaK and GrpE are required for fully efficient folding. Also involved, together with DnaK and GrpE, in the DNA replication of plasmids through activation of initiation proteins. The polypeptide is Chaperone protein DnaJ (Actinobacillus pleuropneumoniae serotype 5b (strain L20)).